A 699-amino-acid chain; its full sequence is Elongation factor G (699 aa).

The tr-type G domain occupies 8-283 (EHIRNIGICA…AVVDFLPSPI (276 aa)). GTP contacts are provided by residues 17-24 (AHIDAGKT), 81-85 (DTPGH), and 135-138 (NKMD).

This sequence belongs to the TRAFAC class translation factor GTPase superfamily. Classic translation factor GTPase family. EF-G/EF-2 subfamily.

The protein localises to the cytoplasm. Catalyzes the GTP-dependent ribosomal translocation step during translation elongation. During this step, the ribosome changes from the pre-translocational (PRE) to the post-translocational (POST) state as the newly formed A-site-bound peptidyl-tRNA and P-site-bound deacylated tRNA move to the P and E sites, respectively. Catalyzes the coordinated movement of the two tRNA molecules, the mRNA and conformational changes in the ribosome. The chain is Elongation factor G from Rickettsia rickettsii (strain Iowa).